The sequence spans 233 residues: Endo-1,4-beta-xylanase 1 (233 aa).

The N-terminal stretch at M1–A20 is a signal peptide. N27 is a glycosylation site (N-linked (GlcNAc...) asparagine). Residues Q40–Q230 form the GH11 domain. Catalysis depends on E126, which acts as the Nucleophile. E217 acts as the Proton donor in catalysis.

The protein belongs to the glycosyl hydrolase 11 (cellulase G) family.

It localises to the secreted. The enzyme catalyses Endohydrolysis of (1-&gt;4)-beta-D-xylosidic linkages in xylans.. It participates in glycan degradation; xylan degradation. In terms of biological role, endo-1,4-beta-xylanase involved in the hydrolysis of xylan, a major structural heterogeneous polysaccharide found in plant biomass representing the second most abundant polysaccharide in the biosphere, after cellulose. Accounts for approximately 70 percent of the endoxylanase activity in the culture filtrate. This is Endo-1,4-beta-xylanase 1 (XYL1) from Pyricularia grisea (Crabgrass-specific blast fungus).